A 561-amino-acid polypeptide reads, in one-letter code: Mesoderm induction early response protein 2 (561 aa).

Disordered regions lie at residues Met1–Asn28 and Gln52–Leu188. Ser11 bears the Phosphoserine mark. Positions Gln140–Ser165 are enriched in polar residues. Residues Lys195 to Val292 form the ELM2 domain. Positions Asp297–Arg349 constitute an SANT domain. Positions Gly360–Pro515 are disordered. Residues Leu417–Gly428 are compositionally biased toward low complexity. Residues Ser439–Asp451 are compositionally biased toward pro residues. A compositionally biased stretch (low complexity) spans Pro453–Ala482.

As to quaternary structure, part of a complex containing at least CDYL, MIER1, MIER2, HDAC1 and HDAC2.

It is found in the nucleus. Transcriptional repressor. In Bos taurus (Bovine), this protein is Mesoderm induction early response protein 2 (MIER2).